We begin with the raw amino-acid sequence, 209 residues long: Octanoyltransferase (209 aa).

Residues 29 to 209 enclose the BPL/LPL catalytic domain; that stretch reads EHTPDELWVV…CHQLQPEIDS (181 aa). Substrate contacts are provided by residues 71–78, 138–140, and 151–153; these read RGGQVTYH, SLG, and GLA. Catalysis depends on C169, which acts as the Acyl-thioester intermediate.

It belongs to the LipB family.

Its subcellular location is the cytoplasm. It carries out the reaction octanoyl-[ACP] + L-lysyl-[protein] = N(6)-octanoyl-L-lysyl-[protein] + holo-[ACP] + H(+). Its pathway is protein modification; protein lipoylation via endogenous pathway; protein N(6)-(lipoyl)lysine from octanoyl-[acyl-carrier-protein]: step 1/2. Catalyzes the transfer of endogenously produced octanoic acid from octanoyl-acyl-carrier-protein onto the lipoyl domains of lipoate-dependent enzymes. Lipoyl-ACP can also act as a substrate although octanoyl-ACP is likely to be the physiological substrate. The chain is Octanoyltransferase from Hydrogenovibrio crunogenus (strain DSM 25203 / XCL-2) (Thiomicrospira crunogena).